The sequence spans 711 residues: Protein mono-ADP-ribosyltransferase PARP12 (711 aa).

3 C3H1-type zinc fingers span residues 103–128, 164–188, and 189–211; these read LCKF…HNLK, ICLH…IKLH, and ICQY…HEFT. Residues 247 to 279 are disordered; it reads SALSKVSPSPAGPQGSSERKDSSGPVSPGTPSQ. At Ser268 the chain carries Phosphoserine. 2 consecutive C3H1-type zinc fingers follow at residues 280-307 and 281-306; these read EESE…HFHL and ESEQ…VHFH. WWE domains are found at residues 308–371 and 374–468; these read PYRW…RLST and SVTK…KVCR. The residue at position 484 (Cys484) is an ADP-ribosylcysteine. Residues 494–708 enclose the PARP catalytic domain; it reads IPDYWDPAAL…IFVALGNLFT (215 aa). ADP-ribosyl aspartic acid is present on residues Asp610 and Asp621.

The protein belongs to the ARTD/PARP family. As to quaternary structure, interacts with PARP11; this interaction plays a key role in zika virus suppression. Interacts with ISG15. In terms of processing, auto-mono-ADP-ribosylated. Post-translationally, phosphorylated by PRKD1.

The protein localises to the nucleus. It is found in the golgi apparatus. The protein resides in the trans-Golgi network. Its subcellular location is the cytoplasm. It localises to the stress granule. It catalyses the reaction L-aspartyl-[protein] + NAD(+) = 4-O-(ADP-D-ribosyl)-L-aspartyl-[protein] + nicotinamide. The catalysed reaction is L-cysteinyl-[protein] + NAD(+) = S-(ADP-D-ribosyl)-L-cysteinyl-[protein] + nicotinamide + H(+). Mono-ADP-ribosyltransferase that mediates mono-ADP-ribosylation of target proteins. Displays anti-alphavirus activity during IFN-gamma immune activation by directly ADP-ribosylating the alphaviral non-structural proteins nsP3 and nsP4. Acts as a component of the PRKD1-driven regulatory cascade that selectively controls a major branch of the basolateral transport pathway by catalyzing the MARylation of GOLGA1. Acts also as a key regulator of mitochondrial function, protein translation, and inflammation. Inhibits PINK1/Parkin-dependent mitophagy and promotes cartilage degeneration by inhibiting the ubiquitination and SUMOylation of MFN1/2 by upregulating ISG15 and ISGylation. In Mus musculus (Mouse), this protein is Protein mono-ADP-ribosyltransferase PARP12.